A 497-amino-acid chain; its full sequence is Glutamate--tRNA ligase (497 aa).

A 'HIGH' region motif is present at residues 12 to 22 (PSPTGHLHIGN). Residues 259 to 263 (KLSKR) carry the 'KMSKS' region motif. Lys262 contacts ATP.

Belongs to the class-I aminoacyl-tRNA synthetase family. Glutamate--tRNA ligase type 1 subfamily. In terms of assembly, monomer.

Its subcellular location is the cytoplasm. It catalyses the reaction tRNA(Glu) + L-glutamate + ATP = L-glutamyl-tRNA(Glu) + AMP + diphosphate. In terms of biological role, catalyzes the attachment of glutamate to tRNA(Glu) in a two-step reaction: glutamate is first activated by ATP to form Glu-AMP and then transferred to the acceptor end of tRNA(Glu). The polypeptide is Glutamate--tRNA ligase (Lacticaseibacillus casei (strain BL23) (Lactobacillus casei)).